Here is a 442-residue protein sequence, read N- to C-terminus: SPRY domain-containing protein 3 (442 aa).

The B30.2/SPRY domain maps to 17 to 204 (DLNLHYRFLN…VRLHLNAELG (188 aa)). The disordered stretch occupies residues 371-394 (EGEEEEEEEEEEEDGEEIEPEHEG). Positions 372 to 390 (GEEEEEEEEEEEDGEEIEP) are enriched in acidic residues.

The polypeptide is SPRY domain-containing protein 3 (SPRYD3) (Pongo abelii (Sumatran orangutan)).